Here is a 361-residue protein sequence, read N- to C-terminus: Ornithine carbamoyltransferase, mitochondrial (361 aa).

The N-terminal 24 residues, 1 to 24 (MIPTARCGALRQKIPVQAVRQYSS), are a transit peptide targeting the mitochondrion. Carbamoyl phosphate is bound by residues 89–92 (STRT), Arg140, His167, and Gln170. The L-ornithine site is built by Asn207, Asp273, Ser277, and Met278. Cys315 functions as the Proton acceptor in the catalytic mechanism. Carbamoyl phosphate contacts are provided by residues 315 to 316 (CL) and Arg342.

This sequence belongs to the aspartate/ornithine carbamoyltransferase superfamily. OTCase family. In terms of assembly, homotrimer.

Its subcellular location is the mitochondrion matrix. The enzyme catalyses carbamoyl phosphate + L-ornithine = L-citrulline + phosphate + H(+). Its pathway is amino-acid biosynthesis; L-arginine biosynthesis; L-arginine from L-ornithine and carbamoyl phosphate: step 1/3. In Aspergillus terreus, this protein is Ornithine carbamoyltransferase, mitochondrial (arg1).